Consider the following 439-residue polypeptide: Gap junction gamma-2 protein (439 aa).

Topologically, residues 1–25 are cytoplasmic; that stretch reads MTNMSWSFLTRLLEEIHNHSTFVGK. A helical transmembrane segment spans residues 26–46; sequence VWLTVLVVFRIVLTAVGGEAI. Residues 47 to 78 are Extracellular-facing; it reads YSDEQAKFTCNTRQPGCDNVCYDAFAPLSHVR. Residues 79–99 traverse the membrane as a helical segment; it reads FWVFQIVVISTPSVMYLGYAV. Residues 100–216 lie on the Cytoplasmic side of the membrane; the sequence is HRLARASEQE…EGLMRVYVAQ (117 aa). The tract at residues 108-178 is disordered; the sequence is QERRRALRRR…AEEAGAEEAC (71 aa). Over residues 112 to 125 the composition is skewed to basic residues; it reads RALRRRPGPRRAPR. Over residues 140 to 174 the composition is skewed to acidic residues; sequence DLGEEEPMLGLGEEEEEEETGAAEGAGEEAEEAGA. Residues 217 to 237 form a helical membrane-spanning segment; that stretch reads LVARAAFEVAFLVGQYLLYGF. Residues 238–265 are Extracellular-facing; sequence EVRPFFPCSRQPCPHVVDCFVSRPTEKT. Residues 266–286 traverse the membrane as a helical segment; it reads VFLLVMYVVSCLCLLLNLCEM. Over 287–439 the chain is Cytoplasmic; the sequence is AHLGLGSAQD…SRDGKTTVWI (153 aa). Residues 364–439 form a disordered region; the sequence is AGDRDRDSSP…SRDGKTTVWI (76 aa). Serine 371 bears the Phosphoserine mark. Over residues 378-393 the composition is skewed to low complexity; it reads PAASRGPPRAGAPASR.

Belongs to the connexin family. Gamma-type subfamily. As to quaternary structure, a connexon is composed of a hexamer of connexins. Interacts with TJP1. Expressed in central nervous system, in sciatic nerve and sural nerve. Also detected in skeletal muscles.

The protein resides in the cell membrane. Its subcellular location is the cell junction. The protein localises to the gap junction. In terms of biological role, one gap junction consists of a cluster of closely packed pairs of transmembrane channels, the connexons, through which materials of low MW diffuse from one cell to a neighboring cell. May play a role in myelination in central and peripheral nervous systems. The polypeptide is Gap junction gamma-2 protein (GJC2) (Homo sapiens (Human)).